A 624-amino-acid polypeptide reads, in one-letter code: Actin-related protein 8 (624 aa).

Methionine 1 carries the post-translational modification N-acetylmethionine. Residues 1–25 (MTQAEKGDAENGKEKGGEKEKEQRG) are compositionally biased toward basic and acidic residues. Residues 1-29 (MTQAEKGDAENGKEKGGEKEKEQRGVKRP) form a disordered region. The ATP site is built by serine 55 and threonine 56. Serine 132 is modified (phosphoserine). Residue 283-286 (DVGD) coordinates ATP. Serine 412 carries the post-translational modification Phosphoserine. The interval 430–460 (SKQEQSAKATADRKSASKPIGFEGDLRGQSS) is disordered.

It belongs to the actin family. ARP8 subfamily. In terms of assembly, component of the chromatin remodeling INO80 complex; specifically part of a complex module associated with the DBINO domain of INO80. Exists as monomers and dimers, but the dimer is most probably the biologically relevant form required for stable interactions with histones that exploits the twofold symmetry of the nucleosome core.

It is found in the nucleus. It localises to the chromosome. In terms of biological role, plays an important role in the functional organization of mitotic chromosomes. Exhibits low basal ATPase activity, and unable to polymerize. Its function is as follows. Proposed core component of the chromatin remodeling INO80 complex which is involved in transcriptional regulation, DNA replication and probably DNA repair. Required for the recruitment of INO80 (and probably the INO80 complex) to sites of DNA damage Strongly prefer nucleosomes and H3-H4 tetramers over H2A-H2B dimers, suggesting it may act as a nucleosome recognition module within the complex. This chain is Actin-related protein 8 (ACTR8), found in Ailuropoda melanoleuca (Giant panda).